The sequence spans 106 residues: Ribonuclease P protein component 4 (106 aa).

Residues Cys-57, Cys-60, Cys-83, and Cys-86 each contribute to the Zn(2+) site.

This sequence belongs to the eukaryotic/archaeal RNase P protein component 4 family. Consists of a catalytic RNA component and at least 4-5 protein subunits. Zn(2+) is required as a cofactor.

The protein resides in the cytoplasm. It catalyses the reaction Endonucleolytic cleavage of RNA, removing 5'-extranucleotides from tRNA precursor.. Its function is as follows. Part of ribonuclease P, a protein complex that generates mature tRNA molecules by cleaving their 5'-ends. This is Ribonuclease P protein component 4 from Saccharolobus solfataricus (strain ATCC 35092 / DSM 1617 / JCM 11322 / P2) (Sulfolobus solfataricus).